The primary structure comprises 384 residues: MPVNEEDLKTYRRDLHKIPELALAEFKTHRYLLEKIQSWQTNFMTIRQVEELPTAMLVKFSGTDPSRTVGYRADIDALPVTEDTGLPFESTHKGVMHACGHDVHMSLALGLVQYFSEHQPKDNLIVFFQPAEESKSGGKLAVDLGIFEGEWHPDEFYGIHDQPNLPAGTLSTLAGTLFAGTAELEIDIHGQGGHAAYPHLGKDPIVISAELIMLLQTVVSRDVDPIEGGVVSLGMISGGFTNNVIPDTVHLAGTVRSMTKDGLDKMTTRIRQIVEGVALANDVKINVRLETGSYLPVENNPDLANNLLSFMEQRQDIAFEEAKPAMTGEDFGYILQHIPGVMLWLGVNDNHSLHSAKLNIDEAALLPGFNALKDFIEWRMSQGE.

Asp74 is an active-site residue. Glu133 acts as the Proton acceptor in catalysis.

The protein belongs to the peptidase M20A family. N-acetyldiaminopimelate deacetylase subfamily.

The catalysed reaction is N-acetyl-(2S,6S)-2,6-diaminopimelate + H2O = (2S,6S)-2,6-diaminopimelate + acetate. It participates in amino-acid biosynthesis; L-lysine biosynthesis via DAP pathway; LL-2,6-diaminopimelate from (S)-tetrahydrodipicolinate (acetylase route): step 3/3. Functionally, catalyzes the conversion of N-acetyl-diaminopimelate to diaminopimelate and acetate. The chain is N-acetyldiaminopimelate deacetylase from Leuconostoc mesenteroides subsp. mesenteroides (strain ATCC 8293 / DSM 20343 / BCRC 11652 / CCM 1803 / JCM 6124 / NCDO 523 / NBRC 100496 / NCIMB 8023 / NCTC 12954 / NRRL B-1118 / 37Y).